Reading from the N-terminus, the 425-residue chain is Putative TRAP transporter large permease protein HI_1029 (425 aa).

13 helical membrane passes run 3-23 (VIIF…VAFA), 24-44 (LLIC…QILA), 54-74 (FSLM…EGGL), 93-113 (LGFV…SAVA), 139-159 (LIGT…FIVF), 169-189 (KLFL…AILW), 217-237 (VWAL…IFTP), 241-261 (GVVA…ELPL), 275-295 (TAVV…ITVA), 312-332 (PTIL…VMDL), 334-354 (PTVL…GIDP), 355-375 (VYFG…PPVG), and 399-419 (YLGM…LILM).

The protein belongs to the TRAP transporter large permease family.

It is found in the cell inner membrane. The protein is Putative TRAP transporter large permease protein HI_1029 of Haemophilus influenzae (strain ATCC 51907 / DSM 11121 / KW20 / Rd).